The sequence spans 159 residues: Ribosomal RNA large subunit methyltransferase H (159 aa).

S-adenosyl-L-methionine is bound by residues Leu-76, Gly-108, and 127–132 (FGLLTL).

The protein belongs to the RNA methyltransferase RlmH family. In terms of assembly, homodimer.

The protein resides in the cytoplasm. It catalyses the reaction pseudouridine(1915) in 23S rRNA + S-adenosyl-L-methionine = N(3)-methylpseudouridine(1915) in 23S rRNA + S-adenosyl-L-homocysteine + H(+). In terms of biological role, specifically methylates the pseudouridine at position 1915 (m3Psi1915) in 23S rRNA. The chain is Ribosomal RNA large subunit methyltransferase H from Streptococcus mutans serotype c (strain ATCC 700610 / UA159).